The following is a 798-amino-acid chain: Peroxisome proliferator-activated receptor gamma coactivator 1-alpha (798 aa).

Lys-79 carries the N6-acetyllysine modification. Residues 100-140 (PVDEDGLPSFDALTDGDVTTDNEASPSSMPDGTPPPQEAEE) form a disordered region. Residues 116–129 (DVTTDNEASPSSMP) are compositionally biased toward polar residues. The short motif at 144–148 (LKKLL) is the LXXLL motif element. The residue at position 146 (Lys-146) is an N6-acetyllysine. The residue at position 178 (Thr-178) is a Phosphothreonine; by AMPK. Position 184 is an N6-acetyllysine (Lys-184). Positions 213–277 (YLTTNDDPPH…NDPKGSPFEN (65 aa)) are disordered. Residues 219-237 (DPPHTKPTENRNSSRDKCT) are compositionally biased toward basic and acidic residues. Lys-254, Lys-271, Lys-278, and Lys-321 each carry N6-acetyllysine. Positions 290-351 (GTAGLTPPTT…NNSTKKGPEQ (62 aa)) are disordered. Residues 293–339 (GLTPPTTPPHKANQDNPFRASPKLKSSCKTVVPPPSKKPRYSESSGT) are interaction with PPARG. Over residues 334–346 (SESSGTQGNNSTK) the composition is skewed to polar residues. Lys-347, Lys-413, Lys-442, and Lys-451 each carry N6-acetyllysine. Residues 350–798 (EQSELYAQLS…LKEAQRSLRR (449 aa)) form a mediates interaction with RNF34 region. The residue at position 539 (Ser-539) is a Phosphoserine; by AMPK. Disordered stretches follow at residues 542–599 (SFNS…SSRS), 613–639 (HRNS…SYEE), and 650–669 (YRRE…ERQR). The span at 563–578 (QRMRSRSRSFSRHRSC) shows a compositional bias: basic residues. The span at 579 to 599 (SRSPYSRSRSRSPGSRSSSRS) shows a compositional bias: low complexity. Residues 622-631 (SRSRSPYSRR) are compositionally biased toward basic residues. The region spanning 677–753 (RVIYVGKIRP…TDFELYFCGR (77 aa)) is the RRM domain. 2 positions are modified to N6-acetyllysine: Lys-758 and Lys-779.

As to quaternary structure, homooligomer. Interacts with MYBBP1A; inhibits MYBBP1A transcriptional activation. Interacts with PRDM16, LPIN1 and PML. Interacts (via LXXLL motif) with RORA and RORC (via AF-2 motif); activates RORA and RORC transcriptional activation. Interacts with LRPPRC. Interacts with FOXO1. Interacts with NR5A2. Post-translationally, phosphorylation by AMPK in skeletal muscle increases activation of its own promoter. Phosphorylated by CLK2. Heavily acetylated by KAT2A/GCN5 under conditions of high nutrients, leading to inactivation of PPARGC1A. Deacetylated by SIRT1 in low nutrients/high NAD conditions, leading to its activation. In terms of processing, ubiquitinated. Ubiquitination by RNF34 induces proteasomal degradation. As to expression, heart, skeletal muscle, liver and kidney. Expressed at lower levels in brain and pancreas and at very low levels in the intestine and white adipose tissue. In skeletal muscle, levels were lower in obese than in lean subjects and fasting induced a 2-fold increase in levels in the skeletal muscle in obese subjects.

The protein resides in the nucleus. Its subcellular location is the PML body. It is found in the cytoplasm. In terms of biological role, transcriptional coactivator for steroid receptors and nuclear receptors. Greatly increases the transcriptional activity of PPARG and thyroid hormone receptor on the uncoupling protein promoter. Can regulate key mitochondrial genes that contribute to the program of adaptive thermogenesis. Plays an essential role in metabolic reprogramming in response to dietary availability through coordination of the expression of a wide array of genes involved in glucose and fatty acid metabolism. Acts as a key regulator of gluconeogenesis: stimulates hepatic gluconeogenesis by increasing the expression of gluconeogenic enzymes, and acting together with FOXO1 to promote the fasting gluconeogenic program. Induces the expression of PERM1 in the skeletal muscle in an ESRRA-dependent manner. Also involved in the integration of the circadian rhythms and energy metabolism. Required for oscillatory expression of clock genes, such as BMAL1 and NR1D1, through the coactivation of RORA and RORC, and metabolic genes, such as PDK4 and PEPCK. The polypeptide is Peroxisome proliferator-activated receptor gamma coactivator 1-alpha (PPARGC1A) (Homo sapiens (Human)).